Here is a 292-residue protein sequence, read N- to C-terminus: Elongation factor Ts (292 aa).

The interval Thr80–Val83 is involved in Mg(2+) ion dislocation from EF-Tu.

This sequence belongs to the EF-Ts family.

The protein localises to the cytoplasm. In terms of biological role, associates with the EF-Tu.GDP complex and induces the exchange of GDP to GTP. It remains bound to the aminoacyl-tRNA.EF-Tu.GTP complex up to the GTP hydrolysis stage on the ribosome. This is Elongation factor Ts from Tolumonas auensis (strain DSM 9187 / NBRC 110442 / TA 4).